A 65-amino-acid chain; its full sequence is Light-harvesting protein B800/830/1020 alpha-2 chain (65 aa).

Residues 1 to 13 are Cytoplasmic-facing; it reads MWKLWKFVDFRMT. Residues 14–34 traverse the membrane as a helical segment; it reads AVGFHIFFALIAFAVHFACIS. His29 serves as a coordination point for a bacteriochlorophyll. Over 35–65 the chain is Periplasmic; it reads SERFNWLEGAPAAEYYMDENPGIWKRTSYDG.

This sequence belongs to the antenna complex alpha subunit family. As to quaternary structure, the core complex is formed by different alpha and beta chains, binding bacteriochlorophyll molecules, and arranged most probably in tetrameric structures disposed around the reaction center. The non-pigmented gamma chains may constitute additional components.

Its subcellular location is the cell inner membrane. Functionally, antenna complexes are light-harvesting systems, which transfer the excitation energy to the reaction centers. The sequence is that of Light-harvesting protein B800/830/1020 alpha-2 chain from Halorhodospira halochloris (Ectothiorhodospira halochloris).